Here is a 781-residue protein sequence, read N- to C-terminus: Tax1-binding protein 1 homolog A (781 aa).

Coiled-coil stretches lie at residues 148–453 and 488–581; these read NSDI…QGDA and DVEK…YMRE. Polar residues predominate over residues 441 to 465; the sequence is KLTQQQETQQGDANRNDASTETTLE. Disordered regions lie at residues 441–510 and 630–691; these read KLTQ…EEEC and ETRD…EAPA. A compositionally biased stretch (basic and acidic residues) spans 484–495; sequence TVARDVEKSRDE. The span at 496-510 shows a compositional bias: acidic residues; that stretch reads EGNEQEEEDEEEEEC. Over residues 646 to 656 the composition is skewed to pro residues; it reads RPPPLAPPPWG. UBZ1-type zinc fingers lie at residues 716–742 and 743–769; these read HKQCPLCEVIFPPHFEQSSFERHVESH and WRVCPVCSEQFPLDCQQQLYEKHVHTH. The Zn(2+) site is built by Cys-719, Cys-722, His-738, His-742, Cys-746, Cys-749, His-765, and His-769.

As to expression, little expression is observed during pectoral fin development, except for an elevated level of expression in the distal mesenchyme cells of some samples.

Its function is as follows. May have anti-apoptotic activity. The chain is Tax1-binding protein 1 homolog A from Danio rerio (Zebrafish).